Here is a 47-residue protein sequence, read N- to C-terminus: Defensin-like protein 1 (47 aa).

Disulfide bonds link Cys-3–Cys-47, Cys-14–Cys-34, Cys-20–Cys-41, and Cys-24–Cys-43.

As to quaternary structure, monomer and homodimer.

Its function is as follows. Inhibits trypsin but not chymotrypsin. This is Defensin-like protein 1 from Vigna unguiculata (Cowpea).